A 180-amino-acid chain; its full sequence is NADH-quinone oxidoreductase subunit I (180 aa).

4Fe-4S ferredoxin-type domains follow at residues 48–80 (IVLT…LQKS) and 90–119 (EFFR…LTPD). The [4Fe-4S] cluster site is built by C60, C63, C66, C70, C99, C102, C105, and C109. The segment covering 161 to 174 (KPKGDAENEAKPID) has biased composition (basic and acidic residues). Residues 161-180 (KPKGDAENEAKPIDVKSLLP) form a disordered region.

It belongs to the complex I 23 kDa subunit family. NDH-1 is composed of 14 different subunits. Subunits NuoA, H, J, K, L, M, N constitute the membrane sector of the complex. [4Fe-4S] cluster is required as a cofactor.

The protein localises to the cell inner membrane. The enzyme catalyses a quinone + NADH + 5 H(+)(in) = a quinol + NAD(+) + 4 H(+)(out). Its function is as follows. NDH-1 shuttles electrons from NADH, via FMN and iron-sulfur (Fe-S) centers, to quinones in the respiratory chain. The immediate electron acceptor for the enzyme in this species is believed to be ubiquinone. Couples the redox reaction to proton translocation (for every two electrons transferred, four hydrogen ions are translocated across the cytoplasmic membrane), and thus conserves the redox energy in a proton gradient. This chain is NADH-quinone oxidoreductase subunit I, found in Aeromonas hydrophila subsp. hydrophila (strain ATCC 7966 / DSM 30187 / BCRC 13018 / CCUG 14551 / JCM 1027 / KCTC 2358 / NCIMB 9240 / NCTC 8049).